The primary structure comprises 425 residues: Sucrose-phosphatase 2 (425 aa).

It belongs to the sucrose phosphatase family. As to quaternary structure, homodimer. The cofactor is Mg(2+).

The catalysed reaction is sucrose 6(F)-phosphate + H2O = sucrose + phosphate. Its pathway is glycan biosynthesis; sucrose biosynthesis; sucrose from D-fructose 6-phosphate and UDP-alpha-D-glucose: step 2/2. Inhibited by EDTA. Catalyzes the final step of sucrose synthesis. This Nicotiana tabacum (Common tobacco) protein is Sucrose-phosphatase 2 (SPP2).